Reading from the N-terminus, the 264-residue chain is 3-methyl-2-oxobutanoate hydroxymethyltransferase (264 aa).

Mg(2+) contacts are provided by Asp45 and Asp84. 3-methyl-2-oxobutanoate-binding positions include 45–46, Asp84, and Lys112; that span reads DS. Glu114 contributes to the Mg(2+) binding site. The active-site Proton acceptor is Glu181.

The protein belongs to the PanB family. As to quaternary structure, homodecamer; pentamer of dimers. The cofactor is Mg(2+).

The protein localises to the cytoplasm. The enzyme catalyses 3-methyl-2-oxobutanoate + (6R)-5,10-methylene-5,6,7,8-tetrahydrofolate + H2O = 2-dehydropantoate + (6S)-5,6,7,8-tetrahydrofolate. It functions in the pathway cofactor biosynthesis; (R)-pantothenate biosynthesis; (R)-pantoate from 3-methyl-2-oxobutanoate: step 1/2. In terms of biological role, catalyzes the reversible reaction in which hydroxymethyl group from 5,10-methylenetetrahydrofolate is transferred onto alpha-ketoisovalerate to form ketopantoate. The chain is 3-methyl-2-oxobutanoate hydroxymethyltransferase from Shewanella frigidimarina (strain NCIMB 400).